A 478-amino-acid polypeptide reads, in one-letter code: Antiviral innate immune response effector IFIT1 (478 aa).

6 TPR repeats span residues 52–85 (VGIH…MQEE), 95–128 (LVTW…CKKL), 141–174 (IDCE…DPEN), 183–216 (ISAY…NPDN), 218–249 (YIKV…NMSS), and 251–284 (TYVF…TPTS). Trp-147 is an mRNA binding site. RNA is bound at residue Gly-190. Positions 259, 289, 290, and 336 each coordinate RNA. TPR repeat units follow at residues 305–339 (ATKG…KPTF), 340–373 (EVAH…KPVV), 378–412 (QDIH…EQAS), and 437–470 (LESL…AADF).

Belongs to the IFIT family. As to quaternary structure, component of an interferon-dependent multiprotein complex, at least composed of IFIT1, IFIT2 and IFIT3. Interacts (via TPR repeats 1-4) with RPL15. Interacts with STING1/MITA; could disrupt STING1 interaction with MAVS or TBK1, acting as a negative-feedback regulator of virus-triggered signaling. Interacts with EIF3E; this could be an alternative way to inhibit translation. Post-translationally, phosphorylated. ISGylated.

It is found in the cytoplasm. Functionally, plays a key role in the innate immune response as part of an interferon-dependent multiprotein complex, recognizing and sequestering viral RNAs that lack host-specific 2'-O-methylation at their 5' cap. By distinguishing these RNAs from host mRNAs, inhibits their translation by competing with the translation initiation factor eIF4E. Could also prevent viral replication through its interaction with DNA replication origin-binding protein E1 of several viruses. Causes the translocation of E1 from the nucleus to the cytoplasm and can also inhibit its helicase activity in vitro. Exhibits antiviral activity against many viruses from the Flaviviridae (West Nile virus, Dengue virus, hepatitis C virus), Coronaviridae (human 229E coronavirus, SARS-CoV-2 and SARS-CoV), Poxviridae (vaccinia virus) and Togaviridae (Sindbis virus) families. In Homo sapiens (Human), this protein is Antiviral innate immune response effector IFIT1.